Here is a 365-residue protein sequence, read N- to C-terminus: Putative carbonic anhydrase-like protein 1 (365 aa).

Positions 1–25 are cleaved as a signal peptide; sequence MRFECSHFPLFLIILTCHISPLKSS. Residues 28-356 enclose the Alpha-carbonic anhydrase domain; that stretch reads YQWSYDSDVF…TNNRLVRTNI (329 aa). The active site involves Y223. Substrate-binding positions include T295 and 295-296; that span reads TS.

It belongs to the alpha-carbonic anhydrase family.

It is found in the secreted. In Caenorhabditis elegans, this protein is Putative carbonic anhydrase-like protein 1 (cah-1).